Reading from the N-terminus, the 57-residue chain is Large ribosomal subunit protein bL32c (57 aa).

Belongs to the bacterial ribosomal protein bL32 family.

The protein localises to the plastid. It is found in the chloroplast. The protein is Large ribosomal subunit protein bL32c of Liriodendron tulipifera (Tuliptree).